A 336-amino-acid polypeptide reads, in one-letter code: Protein SphX (336 aa).

The first 27 residues, methionine 1–serine 27, serve as a signal peptide directing secretion.

The protein belongs to the PstS family.

Its function is as follows. May be involved in the system for phosphate transport across the cytoplasmic membrane. In Synechocystis sp. (strain ATCC 27184 / PCC 6803 / Kazusa), this protein is Protein SphX (sphX).